A 269-amino-acid chain; its full sequence is Regulating synaptic membrane exocytosis protein 4 (269 aa).

A C2 domain is found at 115–233 (PMGGVEIGLQ…DLTTLAVGWY (119 aa)). Ser254 and Ser257 each carry phosphoserine.

In terms of assembly, binds PPFIA3. Brain specific.

The protein resides in the synapse. Its function is as follows. Regulates synaptic membrane exocytosis. This is Regulating synaptic membrane exocytosis protein 4 (Rims4) from Rattus norvegicus (Rat).